The following is an 859-amino-acid chain: Kinesin-like protein KIN-14T (859 aa).

A Kinesin motor domain is found at 91 to 411; that stretch reads NIRVFCRVKP…LNFATRAKNI (321 aa). 168–175 is a binding site for ATP; sequence GQTGTGKT. Positions 422 to 463 form a coiled coil; sequence QAKKEAVMMNLQKMMEKIEQEREMSLRKMRNLNETLEKLTGK. A disordered region spans residues 511-530; that stretch reads LSGADFSVTPNSSSFKSRRN. A compositionally biased stretch (polar residues) spans 518–530; the sequence is VTPNSSSFKSRRN.

It belongs to the TRAFAC class myosin-kinesin ATPase superfamily. Kinesin family. KIN-14 subfamily.

The chain is Kinesin-like protein KIN-14T from Arabidopsis thaliana (Mouse-ear cress).